The sequence spans 262 residues: Phosphate import ATP-binding protein PstB (262 aa).

The ABC transporter domain occupies 16 to 257; that stretch reads IDVRNLNFYY…PHRKETEDYI (242 aa). Residue 48-55 participates in ATP binding; that stretch reads GPSGCGKS.

It belongs to the ABC transporter superfamily. Phosphate importer (TC 3.A.1.7) family. The complex is composed of two ATP-binding proteins (PstB), two transmembrane proteins (PstC and PstA) and a solute-binding protein (PstS).

It is found in the cell inner membrane. The catalysed reaction is phosphate(out) + ATP + H2O = ADP + 2 phosphate(in) + H(+). Its function is as follows. Part of the ABC transporter complex PstSACB involved in phosphate import. Responsible for energy coupling to the transport system. The protein is Phosphate import ATP-binding protein PstB of Cupriavidus metallidurans (strain ATCC 43123 / DSM 2839 / NBRC 102507 / CH34) (Ralstonia metallidurans).